A 480-amino-acid chain; its full sequence is 6-phosphogluconate dehydrogenase, decarboxylating (480 aa).

NADP(+) contacts are provided by residues 11 to 16 (GLAVMG), 34 to 36 (NRS), 76 to 78 (IKA), and N104. Residues N104 and 130–132 (SGG) contribute to the substrate site. K184 serves as the catalytic Proton acceptor. A substrate-binding site is contributed by 187 to 188 (HN). E191 serves as the catalytic Proton donor. Positions 192, 261, 288, 448, and 454 each coordinate substrate.

This sequence belongs to the 6-phosphogluconate dehydrogenase family. As to quaternary structure, homodimer.

It carries out the reaction 6-phospho-D-gluconate + NADP(+) = D-ribulose 5-phosphate + CO2 + NADPH. It functions in the pathway carbohydrate degradation; pentose phosphate pathway; D-ribulose 5-phosphate from D-glucose 6-phosphate (oxidative stage): step 3/3. Functionally, catalyzes the oxidative decarboxylation of 6-phosphogluconate to ribulose 5-phosphate and CO(2), with concomitant reduction of NADP to NADPH. In Chlamydia trachomatis serovar D (strain ATCC VR-885 / DSM 19411 / UW-3/Cx), this protein is 6-phosphogluconate dehydrogenase, decarboxylating (gnd).